We begin with the raw amino-acid sequence, 2524 residues long: Neurogenic locus notch homolog protein 1 (2524 aa).

A signal peptide spans methionine 1 to glycine 19. 4 consecutive EGF-like domains span residues leucine 20–glutamine 57, phenylalanine 58–leucine 99, valine 102–glutamine 140, and glutamine 141–lysine 177. Residues leucine 20 to tyrosine 1729 lie on the Extracellular side of the membrane. Cystine bridges form between cysteine 22/cysteine 35, cysteine 29/cysteine 45, cysteine 47/cysteine 56, cysteine 62/cysteine 74, cysteine 68/cysteine 87, cysteine 89/cysteine 98, cysteine 106/cysteine 117, cysteine 111/cysteine 128, cysteine 130/cysteine 139, cysteine 145/cysteine 156, cysteine 150/cysteine 165, cysteine 167/cysteine 176, cysteine 183/cysteine 194, cysteine 188/cysteine 203, cysteine 205/cysteine 214, cysteine 221/cysteine 232, cysteine 226/cysteine 242, cysteine 244/cysteine 253, cysteine 260/cysteine 271, cysteine 265/cysteine 280, cysteine 282/cysteine 291, cysteine 298/cysteine 311, cysteine 305/cysteine 320, cysteine 322/cysteine 331, cysteine 338/cysteine 349, cysteine 343/cysteine 358, cysteine 360/cysteine 369, cysteine 375/cysteine 386, cysteine 380/cysteine 397, cysteine 399/cysteine 408, cysteine 415/cysteine 428, cysteine 422/cysteine 437, and cysteine 439/cysteine 448. One can recognise an EGF-like 5; calcium-binding domain in the interval aspartate 179–aspartate 215. The EGF-like 6 domain occupies proline 217–glutamate 254. O-linked (Fuc...) threonine; alternate glycosylation occurs at threonine 231. Threonine 231 is a glycosylation site (O-linked (GalNAc...) threonine; alternate). In terms of domain architecture, EGF-like 7; calcium-binding spans asparagine 256–threonine 292. Residues aspartate 294–serine 332 enclose the EGF-like 8; calcium-binding domain. Residues asparagine 334–histidine 370 form the EGF-like 9; calcium-binding domain. Residues leucine 371–asparagine 409 form the EGF-like 10 domain. The region spanning aspartate 411 to glutamate 449 is the EGF-like 11; calcium-binding domain. Ca(2+) contacts are provided by threonine 431 and serine 434. O-linked (Glc...) serine glycosylation is present at serine 434. The Ca(2+) site is built by aspartate 451, valine 452, and glutamate 454. The region spanning aspartate 451 to glutamate 487 is the EGF-like 12; calcium-binding domain. Cystine bridges form between cysteine 455/cysteine 466, cysteine 460/cysteine 475, and cysteine 477/cysteine 486. O-linked (Glc...) serine glycosylation occurs at serine 457. N-linked (GlcNAc...) asparagine glycosylation occurs at asparagine 462. Threonine 465 carries an O-linked (Fuc...) threonine glycan. Aspartate 468 and glutamine 469 together coordinate Ca(2+). Residues asparagine 489, isoleucine 490, and glutamate 492 each contribute to the Ca(2+) site. An EGF-like 13; calcium-binding domain is found at asparagine 489–glutamine 525. 75 disulfide bridges follow: cysteine 493-cysteine 504, cysteine 498-cysteine 513, cysteine 515-cysteine 524, cysteine 531-cysteine 542, cysteine 536-cysteine 551, cysteine 553-cysteine 562, cysteine 569-cysteine 579, cysteine 574-cysteine 588, cysteine 590-cysteine 599, cysteine 606-cysteine 617, cysteine 611-cysteine 626, cysteine 628-cysteine 637, cysteine 644-cysteine 654, cysteine 649-cysteine 663, cysteine 665-cysteine 674, cysteine 681-cysteine 692, cysteine 686-cysteine 701, cysteine 703-cysteine 712, cysteine 719-cysteine 729, cysteine 724-cysteine 738, cysteine 740-cysteine 749, cysteine 756-cysteine 767, cysteine 761-cysteine 776, cysteine 778-cysteine 787, cysteine 794-cysteine 805, cysteine 799-cysteine 814, cysteine 816-cysteine 825, cysteine 832-cysteine 843, cysteine 837-cysteine 854, cysteine 856-cysteine 865, cysteine 872-cysteine 883, cysteine 877-cysteine 892, cysteine 894-cysteine 903, cysteine 910-cysteine 921, cysteine 915-cysteine 930, cysteine 932-cysteine 941, cysteine 948-cysteine 959, cysteine 953-cysteine 968, cysteine 970-cysteine 979, cysteine 986-cysteine 997, cysteine 991-cysteine 1006, cysteine 1008-cysteine 1017, cysteine 1024-cysteine 1035, cysteine 1029-cysteine 1044, cysteine 1046-cysteine 1055, cysteine 1062-cysteine 1073, cysteine 1067-cysteine 1082, cysteine 1084-cysteine 1093, cysteine 1100-cysteine 1121, cysteine 1115-cysteine 1130, cysteine 1132-cysteine 1141, cysteine 1148-cysteine 1159, cysteine 1153-cysteine 1168, cysteine 1170-cysteine 1179, cysteine 1186-cysteine 1197, cysteine 1191-cysteine 1206, cysteine 1208-cysteine 1217, cysteine 1224-cysteine 1243, cysteine 1237-cysteine 1252, cysteine 1254-cysteine 1263, cysteine 1270-cysteine 1283, cysteine 1275-cysteine 1292, cysteine 1294-cysteine 1303, cysteine 1310-cysteine 1321, cysteine 1315-cysteine 1333, cysteine 1335-cysteine 1344, cysteine 1351-cysteine 1362, cysteine 1356-cysteine 1371, cysteine 1373-cysteine 1382, cysteine 1390-cysteine 1401, cysteine 1395-cysteine 1412, cysteine 1414-cysteine 1423, cysteine 1447-cysteine 1470, cysteine 1452-cysteine 1465, and cysteine 1461-cysteine 1477. Serine 495 carries O-linked (Glc...) serine glycosylation. Ca(2+) contacts are provided by aspartate 506 and lysine 507. The region spanning aspartate 527–glutamate 563 is the EGF-like 14; calcium-binding domain. The region spanning aspartate 565 to aspartate 600 is the EGF-like 15; calcium-binding domain. The region spanning aspartate 602–glutamate 638 is the EGF-like 16; calcium-binding domain. One can recognise an EGF-like 17 domain in the interval lysine 640–asparagine 675. Residues asparagine 677–leucine 713 form the EGF-like 18; calcium-binding domain. The EGF-like 19; calcium-binding domain maps to glutamate 715–aspartate 750. An EGF-like 20; calcium-binding domain is found at asparagine 752–glutamine 788. The EGF-like 21; calcium-binding domain occupies asparagine 790–glutamate 826. Positions valine 828–glutamate 866 constitute an EGF-like 22 domain. The region spanning aspartate 868–glutamate 904 is the EGF-like 23; calcium-binding domain. An N-linked (GlcNAc...) asparagine glycan is attached at asparagine 887. Residues aspartate 906–glutamate 942 form the EGF-like 24; calcium-binding domain. Positions aspartate 944–glutamate 980 constitute an EGF-like 25; calcium-binding domain. N-linked (GlcNAc...) asparagine glycosylation occurs at asparagine 958. Residues asparagine 982–glutamine 1018 enclose the EGF-like 26 domain. In terms of domain architecture, EGF-like 27; calcium-binding spans aspartate 1020–glutamine 1056. EGF-like domains lie at leucine 1058–aspartate 1094 and proline 1096–glutamate 1142. The EGF-like 30; calcium-binding domain occupies glutamine 1144 to serine 1180. Asparagine 1178 is a glycosylation site (N-linked (GlcNAc...) asparagine). Residues glutamate 1182–glutamate 1218 enclose the EGF-like 31; calcium-binding domain. One can recognise an EGF-like 32; calcium-binding domain in the interval asparagine 1220 to glutamate 1264. 4 consecutive EGF-like domains span residues aspartate 1266–glutamate 1304, valine 1306–tyrosine 1346, aspartate 1347–glutamine 1383, and valine 1386–histidine 1424. O-linked (Fuc...) threonine; alternate glycosylation is present at threonine 1400. The O-linked (GalNAc...) threonine; alternate glycan is linked to threonine 1400. 3 LNR repeats span residues cysteine 1447–asparagine 1487, cysteine 1488–leucine 1529, and tyrosine 1530–glutamate 1564. Residue asparagine 1487 is glycosylated (N-linked (GlcNAc...) asparagine). Cystine bridges form between cysteine 1488/cysteine 1512, cysteine 1494/cysteine 1507, cysteine 1503/cysteine 1519, cysteine 1534/cysteine 1547, and cysteine 1543/cysteine 1559. N-linked (GlcNAc...) asparagine glycosylation occurs at asparagine 1508. N-linked (GlcNAc...) asparagine glycosylation occurs at asparagine 1584. A helical transmembrane segment spans residues proline 1730–valine 1750. The Cytoplasmic portion of the chain corresponds to asparagine 1751–lysine 2524. ANK repeat units follow at residues aspartate 1876 to asparagine 1919, threonine 1924 to valine 1953, methionine 1957 to alanine 1987, aspartate 1991 to alanine 2020, phenylalanine 2024 to methionine 2053, and lysine 2057 to isoleucine 2086. Disordered regions lie at residues asparagine 2144–leucine 2230, methionine 2369–serine 2407, and leucine 2451–lysine 2524. 2 stretches are compositionally biased toward polar residues: residues glycine 2180–valine 2192 and aspartate 2208–leucine 2230. Residues methionine 2369–serine 2394 show a composition bias toward low complexity. Polar residues-rich tracts occupy residues threonine 2395–serine 2407 and leucine 2451–leucine 2471. Positions proline 2481–serine 2496 are enriched in low complexity. Residues asparagine 2497–arginine 2516 show a composition bias toward polar residues.

Belongs to the NOTCH family. In terms of assembly, forms a ternary complex with nrarp and rbpj/suh. Post-translationally, O-glycosylated on the EGF-like domains. Contains both O-linked fucose and O-linked glucose. O-linked glycosylation by galnt11 is involved in determination of left/right symmetry: glycosylation promotes activation of notch1, possibly by promoting cleavage by adam17, modulating the balance between motile and immotile (sensory) cilia at the left-right organiser (LRO). In terms of processing, synthesized in the endoplasmic reticulum as an inactive form which is proteolytically cleaved by a furin-like convertase in the trans-Golgi network before it reaches the plasma membrane to yield an active, ligand-accessible form. Cleavage results in a C-terminal fragment N(TM) and a N-terminal fragment N(EC). Following ligand binding, it is cleaved by adam17 to yield a membrane-associated intermediate fragment called notch extracellular truncation (NEXT). Following endocytosis, this fragment is then cleaved by presenilin dependent gamma-secretase to release a Notch-derived peptide containing the intracellular domain (NICD) from the membrane.

It localises to the cell membrane. The protein localises to the nucleus. Functionally, functions as a receptor for membrane-bound ligands Jagged-1 (JAG1), Jagged-2 (JAG2) and Delta-1 (DLL1) to regulate cell-fate determination. Upon ligand activation through the released notch intracellular domain (NICD) it forms a transcriptional activator complex with RBPJ/RBPSUH and activates genes of the enhancer of split locus. Affects the implementation of differentiation, proliferation and apoptotic programs. Involved in angiogenesis; negatively regulates endothelial cell proliferation and migration and angiogenic sprouting. Involved in the maturation of both CD4(+) and CD8(+) cells in the thymus. Important for follicular differentiation and possibly cell fate selection within the follicle. During cerebellar development, functions as a receptor for neuronal DNER and is involved in the differentiation of Bergmann glia. Represses neuronal and myogenic differentiation. May play an essential role in postimplantation development, probably in some aspect of cell specification and/or differentiation. May be involved in mesoderm development, somite formation and neurogenesis. Involved in determination of left/right symmetry by modulating the balance between motile and immotile (sensory) cilia at the left-right organiser (LRO). The polypeptide is Neurogenic locus notch homolog protein 1 (notch1) (Xenopus laevis (African clawed frog)).